A 194-amino-acid polypeptide reads, in one-letter code: Putative manganese efflux pump MntP (194 aa).

The next 6 membrane-spanning stretches (helical) occupy residues 8–28 (LLAI…GIIL), 36–56 (MLIM…LGWL), 61–81 (FSHL…AFLG), 109–129 (MAVA…FLGI), 138–158 (PAGI…IFGI), and 172–192 (LWGG…HLFF).

The protein belongs to the MntP (TC 9.B.29) family.

Its subcellular location is the cell inner membrane. Functionally, probably functions as a manganese efflux pump. This is Putative manganese efflux pump MntP from Bacteroides fragilis (strain ATCC 25285 / DSM 2151 / CCUG 4856 / JCM 11019 / LMG 10263 / NCTC 9343 / Onslow / VPI 2553 / EN-2).